We begin with the raw amino-acid sequence, 288 residues long: Homoserine kinase (288 aa).

An ATP-binding site is contributed by 79 to 89; the sequence is PPARGLGSSSA.

Belongs to the GHMP kinase family. Homoserine kinase subfamily.

Its subcellular location is the cytoplasm. It catalyses the reaction L-homoserine + ATP = O-phospho-L-homoserine + ADP + H(+). It functions in the pathway amino-acid biosynthesis; L-threonine biosynthesis; L-threonine from L-aspartate: step 4/5. Functionally, catalyzes the ATP-dependent phosphorylation of L-homoserine to L-homoserine phosphate. The protein is Homoserine kinase of Listeria monocytogenes serotype 4b (strain F2365).